Here is a 304-residue protein sequence, read N- to C-terminus: Mitochondrial glycine transporter (304 aa).

Solcar repeat units lie at residues glycine 3–alanine 82, glutamate 106–alanine 186, and serine 209–arginine 293. Transmembrane regions (helical) follow at residues isoleucine 9–glutamine 34, glycine 57–valine 83, leucine 108–glutamate 133, glycine 161–lysine 184, isoleucine 213–methionine 239, and glycine 268–isoleucine 286.

Belongs to the mitochondrial carrier (TC 2.A.29) family. SLC25A38 subfamily.

Its subcellular location is the mitochondrion inner membrane. The catalysed reaction is glycine(in) = glycine(out). Mitochondrial glycine transporter that imports glycine into the mitochondrial matrix. Plays an important role in providing glycine for the first enzymatic step in heme biosynthesis, the condensation of glycine with succinyl-CoA to produce 5-aminolevulinate (ALA) in the mitochondrial matrix. The chain is Mitochondrial glycine transporter from Yarrowia lipolytica (strain CLIB 122 / E 150) (Yeast).